The primary structure comprises 205 residues: GTP cyclohydrolase-2 (205 aa).

49–53 (RIHSE) lines the GTP pocket. Zn(2+) is bound by residues C54, C65, and C67. GTP-binding positions include Q70, 92 to 94 (EGR), and T114. D126 acts as the Proton acceptor in catalysis. Residue R128 is the Nucleophile of the active site. The GTP site is built by T149 and K154.

Belongs to the GTP cyclohydrolase II family. It depends on Zn(2+) as a cofactor.

The catalysed reaction is GTP + 4 H2O = 2,5-diamino-6-hydroxy-4-(5-phosphoribosylamino)-pyrimidine + formate + 2 phosphate + 3 H(+). Its pathway is cofactor biosynthesis; riboflavin biosynthesis; 5-amino-6-(D-ribitylamino)uracil from GTP: step 1/4. In terms of biological role, catalyzes the conversion of GTP to 2,5-diamino-6-ribosylamino-4(3H)-pyrimidinone 5'-phosphate (DARP), formate and pyrophosphate. The sequence is that of GTP cyclohydrolase-2 from Shewanella woodyi (strain ATCC 51908 / MS32).